A 204-amino-acid polypeptide reads, in one-letter code: Crossover junction endodeoxyribonuclease RuvC (204 aa).

Catalysis depends on residues Asp7, Glu68, and Asp141. The Mg(2+) site is built by Asp7, Glu68, and Asp141.

It belongs to the RuvC family. As to quaternary structure, homodimer which binds Holliday junction (HJ) DNA. The HJ becomes 2-fold symmetrical on binding to RuvC with unstacked arms; it has a different conformation from HJ DNA in complex with RuvA. In the full resolvosome a probable DNA-RuvA(4)-RuvB(12)-RuvC(2) complex forms which resolves the HJ. It depends on Mg(2+) as a cofactor.

It localises to the cytoplasm. It catalyses the reaction Endonucleolytic cleavage at a junction such as a reciprocal single-stranded crossover between two homologous DNA duplexes (Holliday junction).. The RuvA-RuvB-RuvC complex processes Holliday junction (HJ) DNA during genetic recombination and DNA repair. Endonuclease that resolves HJ intermediates. Cleaves cruciform DNA by making single-stranded nicks across the HJ at symmetrical positions within the homologous arms, yielding a 5'-phosphate and a 3'-hydroxyl group; requires a central core of homology in the junction. The consensus cleavage sequence is 5'-(A/T)TT(C/G)-3'. Cleavage occurs on the 3'-side of the TT dinucleotide at the point of strand exchange. HJ branch migration catalyzed by RuvA-RuvB allows RuvC to scan DNA until it finds its consensus sequence, where it cleaves and resolves the cruciform DNA. The protein is Crossover junction endodeoxyribonuclease RuvC of Clavibacter sepedonicus (Clavibacter michiganensis subsp. sepedonicus).